A 1035-amino-acid chain; its full sequence is Kinesin-like protein KIN-4A (1035 aa).

The Kinesin motor domain occupies 11–370 (SVKVAVHIRP…LKYANRARNI (360 aa)). 90–97 (GQTGSGKT) contributes to the ATP binding site. Coiled coils occupy residues 408 to 436 (CAEV…HEYR), 504 to 707 (QNSM…RKSS), and 881 to 911 (KEIV…IATS). The interval 704–724 (RKSSPREHSAGTNGFGTNGQT) is disordered.

This sequence belongs to the TRAFAC class myosin-kinesin ATPase superfamily. Kinesin family. KIN-4 subfamily. As to quaternary structure, homodimer. Expressed in stems and flowers. Detected in cells undergoing secondary wall deposition including developing interfascicular fibers and xylem cells, but also in dividing cells and expanding/elongating parenchyma cells.

The protein resides in the cytoplasm. It localises to the cytoskeleton. Kinesin-like motor protein involved in the control of the oriented deposition of cellulose microfibrils. Its motor activity is directed toward the microtubule's plus end. It possesses the potential to drive long-distance transport of cargo along cortical microtubules. Regulates cell wall mechanics during cell elongation, by the regulation of primary and secondary walls deposition. Contributes to cortical microtubule-mediated trafficking of cell wall components. The polypeptide is Kinesin-like protein KIN-4A (Arabidopsis thaliana (Mouse-ear cress)).